The chain runs to 218 residues: UPF0598 protein C8orf82 homolog (218 aa).

Belongs to the UPF0598 family.

The chain is UPF0598 protein C8orf82 homolog from Rattus norvegicus (Rat).